The chain runs to 375 residues: DNA replication and repair protein RecF (375 aa).

30-37 (GENAQGKT) is a binding site for ATP.

Belongs to the RecF family.

Its subcellular location is the cytoplasm. The RecF protein is involved in DNA metabolism; it is required for DNA replication and normal SOS inducibility. RecF binds preferentially to single-stranded, linear DNA. It also seems to bind ATP. This is DNA replication and repair protein RecF from Bacillus anthracis (strain A0248).